The following is a 184-amino-acid chain: NADH-quinone oxidoreductase subunit B (184 aa).

[4Fe-4S] cluster is bound by residues Cys37, Cys38, Cys103, and Cys132.

This sequence belongs to the complex I 20 kDa subunit family. NDH-1 is composed of 14 different subunits. Subunits NuoB, C, D, E, F, and G constitute the peripheral sector of the complex. The cofactor is [4Fe-4S] cluster.

The protein resides in the cell membrane. It carries out the reaction a quinone + NADH + 5 H(+)(in) = a quinol + NAD(+) + 4 H(+)(out). Its function is as follows. NDH-1 shuttles electrons from NADH, via FMN and iron-sulfur (Fe-S) centers, to quinones in the respiratory chain. The immediate electron acceptor for the enzyme in this species is believed to be a menaquinone. Couples the redox reaction to proton translocation (for every two electrons transferred, four hydrogen ions are translocated across the cytoplasmic membrane), and thus conserves the redox energy in a proton gradient. The sequence is that of NADH-quinone oxidoreductase subunit B from Rhodococcus opacus (strain B4).